We begin with the raw amino-acid sequence, 143 residues long: Large ribosomal subunit protein uL11 (143 aa).

Belongs to the universal ribosomal protein uL11 family. As to quaternary structure, part of the ribosomal stalk of the 50S ribosomal subunit. Interacts with L10 and the large rRNA to form the base of the stalk. L10 forms an elongated spine to which L12 dimers bind in a sequential fashion forming a multimeric L10(L12)X complex. Post-translationally, one or more lysine residues are methylated.

In terms of biological role, forms part of the ribosomal stalk which helps the ribosome interact with GTP-bound translation factors. This is Large ribosomal subunit protein uL11 from Rhizorhabdus wittichii (strain DSM 6014 / CCUG 31198 / JCM 15750 / NBRC 105917 / EY 4224 / RW1) (Sphingomonas wittichii).